Reading from the N-terminus, the 71-residue chain is DNA-directed RNA polymerase subunit epsilon (71 aa).

Belongs to the RNA polymerase subunit epsilon family. In terms of assembly, RNAP is composed of a core of 2 alpha, a beta and a beta' subunit. The core is associated with a delta subunit, and at least one of epsilon or omega. When a sigma factor is associated with the core the holoenzyme is formed, which can initiate transcription.

The catalysed reaction is RNA(n) + a ribonucleoside 5'-triphosphate = RNA(n+1) + diphosphate. Functionally, a non-essential component of RNA polymerase (RNAP). The chain is DNA-directed RNA polymerase subunit epsilon from Anoxybacillus flavithermus (strain DSM 21510 / WK1).